Consider the following 154-residue polypeptide: Style cell-cycle inhibitor 1-A (154 aa).

Basic and acidic residues-rich tracts occupy residues 1–11 (MGSDKKTPEEK) and 24–48 (DEVKSKRQNIKGDEERRKEKKDKSK). The disordered stretch occupies residues 1 to 84 (MGSDKKTPEE…DKSKNKFEEL (84 aa)). Positions 63 to 77 (GEKHKTKSHKHKDKS) are enriched in basic residues.

As to expression, specifically expressed in flowers pistils, especially in stigmas and styles. Barely detected in roots, stems, leaves, sepals, petals and stamen.

Its subcellular location is the nucleus. Component of the auxin signaling transduction pathway that regulates cell proliferation and differentiation during flowers stigmas and styles development. Involved in the regulation of auxin-related genes. This chain is Style cell-cycle inhibitor 1-A, found in Nicotiana tabacum (Common tobacco).